We begin with the raw amino-acid sequence, 604 residues long: Beta-(1--&gt;2)glucan export ATP-binding/permease protein NdvA (604 aa).

Residues 21 to 311 enclose the ABC transmembrane type-1 domain; it reads GWILAFANLL…VVSFINSVFM (291 aa). A run of 6 helical transmembrane segments spans residues 22 to 42, 68 to 88, 146 to 166, 168 to 188, 238 to 258, and 285 to 305; these read WILAFANLLLAGAQFAEPVLF, LLGAWVAFGLFTILCSAAVAL, EHFAAILSLVVLLPLALYINW, LAILLFILCVVFTVLTTLVVH, LLALQMPVLSWWALVTVITRA, and IVMFVSFATLLIQKLEQVVSF. In terms of domain architecture, ABC transporter spans 345-579; that stretch reads VEFKDVSFSY…QGHFAALARA (235 aa). 378-385 serves as a coordination point for ATP; sequence GATGAGKS.

This sequence belongs to the ABC transporter superfamily. Beta-(1--&gt;2)glucan exporter (TC 3.A.1.108.1) family. As to quaternary structure, homodimer.

It is found in the cell inner membrane. It carries out the reaction [(1-&gt;2)-beta-D-glucosyl](n)(in) + ATP + H2O = [(1-&gt;2)-beta-D-glucosyl](n)(out) + ADP + phosphate + H(+). In terms of biological role, involved in beta-(1--&gt;2)glucan export. Transmembrane domains (TMD) form a pore in the inner membrane and the ATP-binding domain (NBD) is responsible for energy generation. This is Beta-(1--&gt;2)glucan export ATP-binding/permease protein NdvA from Rhodopseudomonas palustris (strain BisB18).